Consider the following 346-residue polypeptide: NADH-ubiquinone oxidoreductase chain 2 (346 aa).

11 consecutive transmembrane segments (helical) span residues 1–21, 25–45, 60–80, 95–115, 124–144, 149–169, 178–195, 200–219, 242–262, 274–294, and 326–346; these read MNPH…TITI, HWVL…PLIS, FLTQ…NAWA, CLLL…HFWF, LMTA…LLLM, LNPA…GWMG, ILAF…IILV, LALL…FMAL, ATLM…GFMP, EMTP…FFYL, and AILA…HAIV.

This sequence belongs to the complex I subunit 2 family.

It is found in the mitochondrion inner membrane. It catalyses the reaction a ubiquinone + NADH + 5 H(+)(in) = a ubiquinol + NAD(+) + 4 H(+)(out). Core subunit of the mitochondrial membrane respiratory chain NADH dehydrogenase (Complex I) that is believed to belong to the minimal assembly required for catalysis. Complex I functions in the transfer of electrons from NADH to the respiratory chain. The immediate electron acceptor for the enzyme is believed to be ubiquinone. The chain is NADH-ubiquinone oxidoreductase chain 2 (MT-ND2) from Anas acuta (Northern pintail).